Consider the following 244-residue polypeptide: tRNA (guanine-N(7)-)-methyltransferase (244 aa).

Positions 1-20 (MTNPFDSAGSKAPPKPFTVS) are disordered. Glutamate 75, glutamate 100, aspartate 127, and aspartate 150 together coordinate S-adenosyl-L-methionine. The active site involves aspartate 150. Lysine 154 serves as a coordination point for substrate. An interaction with RNA region spans residues 156–161 (RHNKRR). Residues aspartate 186 and 223–226 (THFE) each bind substrate.

It belongs to the class I-like SAM-binding methyltransferase superfamily. TrmB family.

The catalysed reaction is guanosine(46) in tRNA + S-adenosyl-L-methionine = N(7)-methylguanosine(46) in tRNA + S-adenosyl-L-homocysteine. It functions in the pathway tRNA modification; N(7)-methylguanine-tRNA biosynthesis. Its function is as follows. Catalyzes the formation of N(7)-methylguanine at position 46 (m7G46) in tRNA. The sequence is that of tRNA (guanine-N(7)-)-methyltransferase from Stenotrophomonas maltophilia (strain K279a).